Here is a 297-residue protein sequence, read N- to C-terminus: HTH-type transcriptional regulator ArgP (297 aa).

Positions 4-60 (PDYRTLQALDAVIRERGFERAAQKLCITQSAVSQRIKQLENTFGQPLLVRTVPPRPT) constitute an HTH lysR-type domain. The segment at residues 21-40 (FERAAQKLCITQSAVSQRIK) is a DNA-binding region (H-T-H motif).

Belongs to the LysR transcriptional regulatory family. Homodimer.

Its function is as follows. Controls the transcription of genes involved in arginine and lysine metabolism. The chain is HTH-type transcriptional regulator ArgP from Cronobacter sakazakii (strain ATCC BAA-894) (Enterobacter sakazakii).